The chain runs to 344 residues: Putative cyclin-Y-like protein 3 (344 aa).

The Cyclin N-terminal domain occupies 40–170 (ERYANRSLAI…FLELLEFNIH (131 aa)).

It belongs to the cyclin family. Cyclin Y subfamily.

This is Putative cyclin-Y-like protein 3 (CCNYL3) from Homo sapiens (Human).